We begin with the raw amino-acid sequence, 289 residues long: ATP synthase gamma chain (289 aa).

This sequence belongs to the ATPase gamma chain family. In terms of assembly, F-type ATPases have 2 components, CF(1) - the catalytic core - and CF(0) - the membrane proton channel. CF(1) has five subunits: alpha(3), beta(3), gamma(1), delta(1), epsilon(1). CF(0) has three main subunits: a, b and c.

The protein localises to the cell inner membrane. Produces ATP from ADP in the presence of a proton gradient across the membrane. The gamma chain is believed to be important in regulating ATPase activity and the flow of protons through the CF(0) complex. The sequence is that of ATP synthase gamma chain from Cereibacter sphaeroides (strain ATCC 17023 / DSM 158 / JCM 6121 / CCUG 31486 / LMG 2827 / NBRC 12203 / NCIMB 8253 / ATH 2.4.1.) (Rhodobacter sphaeroides).